Reading from the N-terminus, the 280-residue chain is Probable endonuclease 4 (280 aa).

Residues His68, His108, Glu143, Asp177, His180, His214, Asp227, His229, and Glu259 each coordinate Zn(2+).

Belongs to the AP endonuclease 2 family. Zn(2+) is required as a cofactor.

The enzyme catalyses Endonucleolytic cleavage to 5'-phosphooligonucleotide end-products.. In terms of biological role, endonuclease IV plays a role in DNA repair. It cleaves phosphodiester bonds at apurinic or apyrimidinic (AP) sites, generating a 3'-hydroxyl group and a 5'-terminal sugar phosphate. The polypeptide is Probable endonuclease 4 (Cenarchaeum symbiosum (strain A)).